Reading from the N-terminus, the 217-residue chain is Ras-related protein RABA2a (217 aa).

Position 19–26 (19–26 (GDSGVGKS)) interacts with GTP. The short motif at 41-49 (SKSTIGVEF) is the Effector region element. GTP is bound by residues 67-71 (DTAGQ), 125-128 (NKTD), and 155-156 (SA). Residue Cys-213 is the site of S-palmitoyl cysteine attachment. Cys-214 is subject to Cysteine methyl ester. A lipid anchor (S-geranylgeranyl cysteine) is attached at Cys-214. A propeptide spans 215–217 (SSS) (removed in mature form).

This sequence belongs to the small GTPase superfamily. Rab family. In terms of tissue distribution, expressed in root tips.

The protein localises to the endosome membrane. It is found in the golgi apparatus. Its subcellular location is the trans-Golgi network membrane. In terms of biological role, intracellular vesicle trafficking and protein transport. The polypeptide is Ras-related protein RABA2a (RABA2A) (Arabidopsis thaliana (Mouse-ear cress)).